The primary structure comprises 791 residues: Probable potassium transporter 11 (791 aa).

The Cytoplasmic segment spans residues 1–49 (MASLSESEGTNRGSMWELDQNLDQPMDEEASRLKNMYREKKFSSLLLLR). Residues 50 to 70 (LAFQSLGVVFGDLGTSPLYVF) form a helical membrane-spanning segment. Over 71 to 87 (YNAFPHGVDDEEDVIGA) the chain is Extracellular. Residues 88–108 (LSLIIYTLTLIPLLKYVFVVL) traverse the membrane as a helical segment. Over 109-175 (RANDNGQGGT…EAHAYKRNCL (67 aa)) the chain is Cytoplasmic. The chain crosses the membrane as a helical span at residues 176–196 (LIVVLIGTCTAIGDGILTPAI). Residues 197 to 215 (SVLSASGGIKVQNPNMSTD) lie on the Extracellular side of the membrane. N-linked (GlcNAc...) asparagine glycosylation occurs at Asn-211. The chain crosses the membrane as a helical span at residues 216–236 (VVVIVSVIILIGLFSMQHYGT). The Cytoplasmic segment spans residues 237–238 (DK). A helical transmembrane segment spans residues 239–259 (VGWLFAPIVLLWFILIGSVGA). Residues 260 to 289 (LNIHKYKGSVLKAYNPVYIYRYFQRRNSDS) lie on the Extracellular side of the membrane. A helical membrane pass occupies residues 290 to 310 (WASLGGIMLSITGTEALFADL). Over 311–315 (CHFPV) the chain is Cytoplasmic. The chain crosses the membrane as a helical span at residues 316-338 (FAIQIAFTLIVFPCLLLAYTGQA). Over 339-359 (AYIIAHKDHVADAFYRSIPDS) the chain is Extracellular. A helical transmembrane segment spans residues 360–380 (IYWPAFVIATAAAIVASQATI). Over 381 to 411 (SATYSIIKQALALGCFPRVKIVHTSKKFLGQ) the chain is Cytoplasmic. The helical transmembrane segment at 412–432 (IYIPDINWVLLILCIAVTAGF) threads the bilayer. The Extracellular segment spans residues 433–444 (KNQSQIGNAYGT). A glycan (N-linked (GlcNAc...) asparagine) is linked at Asn-434. A helical membrane pass occupies residues 445-465 (AVVIVMLVTTFLMVPIMLLVW). Topologically, residues 466–468 (KSH) are cytoplasmic. Residues 469–489 (WILVVTFIVLSLMVEIPYFSA) form a helical membrane-spanning segment. The Extracellular portion of the chain corresponds to 490 to 496 (CLLKIDQ). A helical transmembrane segment spans residues 497–517 (GGWVPLVIATAFFIIMYVWHF). The Cytoplasmic portion of the chain corresponds to 518–791 (CTVKRYEFEM…LLNVGQIYYI (274 aa)).

This sequence belongs to the HAK/KUP transporter (TC 2.A.72.3) family.

The protein localises to the membrane. Functionally, high-affinity potassium transporter. This chain is Probable potassium transporter 11, found in Oryza sativa subsp. japonica (Rice).